The following is an 817-amino-acid chain: Two pore calcium channel protein 1 (817 aa).

At 1–113 (MAVSLDDDVP…VHNHFFYMME (113 aa)) the chain is on the cytoplasmic side. Residues 20–65 (SAPLPPSNSLGQEQLPSKNGGSHSIHNSQVPSLVSGADSPPSSPTG) form a disordered region. Residues 26–51 (SNSLGQEQLPSKNGGSHSIHNSQVPS) show a composition bias toward polar residues. Residues 114–134 (LLTALLLLLLSLCESPAVPVL) traverse the membrane as a helical segment. The Extracellular segment spans residues 135–137 (KLH). Residues 138-158 (TYVHATLELFALMVVVFELCM) traverse the membrane as a helical segment. The Cytoplasmic portion of the chain corresponds to 159 to 172 (KLRWLGFHTFVRHK). The helical transmembrane segment at 173 to 193 (RTMVKTSVLVVQFIEAIVVLV) threads the bilayer. The Extracellular portion of the chain corresponds to 194–202 (RQTSHVRVT). A helical membrane pass occupies residues 203–221 (RALRCIFLVDCRYCGGVRR). Residues 222–235 (NLRQIFQSLPPFMD) are Cytoplasmic-facing. The chain crosses the membrane as a helical span at residues 236-256 (ILLLLLFFMIIFAILGFYLFS). Residues 257–263 (TNPSDPY) are Extracellular-facing. An intramembrane region (helical; Pore-forming) is located at residues 264–287 (FSTLENSIVNLFVLLTTANFPDVM). Over 288-298 (MPSYSRNPWSC) the chain is Extracellular. A helical membrane pass occupies residues 299–319 (VFFIVYLSIELYFIMNLLLAV). The Cytoplasmic segment spans residues 320-445 (VFDTFNDIEK…NILVNSKAFQ (126 aa)). A helical transmembrane segment spans residues 446–466 (YFMYLVVAVNGVWILVETFML). Residues 467–480 (KGGNFTSKHVPWSY) lie on the Extracellular side of the membrane. Asn-470 is a glycosylation site (N-linked (GlcNAc...) asparagine). Residues 481-501 (LVFLTIYGVELFMKVAGLGPV) form a helical membrane-spanning segment. The Cytoplasmic portion of the chain corresponds to 502–504 (EYL). A helical transmembrane segment spans residues 505-527 (SSGWNLFDFSVTAFAFLGLLALT). Residues 528 to 535 (LNMEPFYF) lie on the Extracellular side of the membrane. The helical transmembrane segment at 536-550 (IVVLRPLQLLRLFKL) threads the bilayer. Topologically, residues 551 to 569 (KKRYRNVLDTMFELLPRMA) are cytoplasmic. A helical membrane pass occupies residues 570–590 (SLGLTLLTFYYSFAIVGMEFF). Over 591-630 (NGRLTPNCCNTSTVADAYRFINHTVGNKTKVEEGYYYLNN) the chain is Extracellular. An intramembrane region (helical; Pore-forming) is located at residues 631–654 (FDNILNSFVTLFELTVVNNWYIIM). Topologically, residues 655-671 (EGVTSQTSHWSRLYFMT) are extracellular. A helical transmembrane segment spans residues 672–692 (FYIVTMVVMTIIVAFILEAFV). Topologically, residues 693-817 (FRMNYSRKSQ…GSRQRSQTVT (125 aa)) are cytoplasmic. Residues 770–794 (SLKMYQEEIQEWYEEHAREQEQQKL) adopt a coiled-coil conformation. Residues 785-817 (HAREQEQQKLRGSVPGPAAQQPPGSRQRSQTVT) form a disordered region. Polar residues predominate over residues 806 to 817 (PPGSRQRSQTVT).

Belongs to the calcium channel alpha-1 subunit (TC 1.A.1.11) family. Two pore calcium channel subfamily. As to quaternary structure, dimer. Interacts with MTOR; the interaction is required for TPCN1 ATP sensitivity. Interacts with STX7, STX8 and STX12. Interacts with JPT2. Found in a complex with LSM12, TPCN1 and TPCN2. N-glycosylated. In terms of tissue distribution, mainly expressed in epithelial tissues like lung, kidney, colon, spleen and liver (at protein level).

It is found in the lysosome membrane. The protein resides in the endosome membrane. Its subcellular location is the early endosome membrane. It localises to the recycling endosome membrane. The catalysed reaction is Na(+)(in) = Na(+)(out). It catalyses the reaction Ca(2+)(in) = Ca(2+)(out). Its activity is regulated as follows. Na(+) current is inhibited by ATP in a MTORC-dependent manner. ATP sensitivity is independent of PI(3,5)P2. Probably regulated by Mg(2+) ions, cytosolic Mg(2+) selectively inhibits outward current while lysosomal Mg(2+) modestly inhibits both the outward and inward currents. In the absence of Mg(2+), NAADP readily activates TPCN2, with properties similar to PI(3,5)P2. Both current elicited by PI(3,5)P2 as well as NAADP are inhibited by tetrandrine. In terms of biological role, intracellular channel initially characterized as a non-selective Ca(2+)-permeable channel activated by NAADP (nicotinic acid adenine dinucleotide phosphate), it is also a voltage-gated highly-selective Na(+) channel activated directly by PI(3,5)P2 (phosphatidylinositol 3,5-bisphosphate) that senses pH changes and confers electrical excitability to organelles. Localizes to the early and recycling endosomes membranes where it plays a role in the uptake and processing of proteins and regulates organellar membrane excitability, membrane trafficking and pH homeostasis. Ion selectivity is not fixed but rather agonist-dependent and under defined ionic conditions, can be readily activated by both NAADP and PI(3,5)P2. Required for mTOR-dependent nutrient sensing. The polypeptide is Two pore calcium channel protein 1 (Mus musculus (Mouse)).